A 34-amino-acid polypeptide reads, in one-letter code: Potassium channel toxin (34 aa).

3 disulfide bridges follow: cysteine 6–cysteine 25, cysteine 11–cysteine 29, and cysteine 15–cysteine 31.

It belongs to the short scorpion toxin superfamily. Potassium channel inhibitor family. Alpha-KTx 21 subfamily. Expressed by the venom gland.

It localises to the secreted. Toxin that blocks voltage-gated potassium channels (Kv). In Tityus metuendus (Scorpion), this protein is Potassium channel toxin.